The chain runs to 342 residues: DNA repair protein RAD51 homolog 1 (342 aa).

A disordered region spans residues 1–24; sequence MTTMEQRRNQNAVQQQDDEETQHG. The region spanning 51 to 80 is the HhH domain; the sequence is TVEGVAYTPRKDLLQIKGISDAKVDKIVEA. Residues 100–314 enclose the FtsK domain; the sequence is QEIIQITSGS…LRKGRAEERI (215 aa). 130–137 provides a ligand contact to ATP; the sequence is GEFRSGKT.

The protein belongs to the RecA family. RAD51 subfamily. Self-associates and interacts with XRCC3. Binds to RAD54/CHR25. Interacts with BRCA2A and BRCA2B. Can form a tripartite complex with both BRCA2B and DSS1(I). In terms of tissue distribution, detected in various tissues. Higher expression in reproductive tissues than in vegetative tissues, with the highest expression level in young flower buds. At cellular level, is expressed at low levels in flower primordia, then at higher levels in young anthers and at highest levels in both females and males meiocytes. Not detected in gametophytes.

It is found in the nucleus. Binds to single and double-stranded DNA and exhibits DNA-dependent ATPase activity. Unwinds duplex DNA. Component of the meiotic recombination pathway. Seems to play a role in mediating chromosome homology search, chromosome pairing and synapsis at early stages and probably chromosome crossing-over at later stages in meiosis. Probably is involved in the repair of meiotic double strand breaks (DBSs) generated by AtSPO11-1 and in homologous recombination. Its function is dispensable for vegetative growth and root mitosis. This chain is DNA repair protein RAD51 homolog 1, found in Arabidopsis thaliana (Mouse-ear cress).